Reading from the N-terminus, the 170-residue chain is Cathelicidin antimicrobial peptide (170 aa).

The N-terminal stretch at 1-30 (MKTQRDGPSLGRWSLVLLLLGLTMPLAITA) is a signal peptide. Residues 31 to 131 (QVLSYQEAVL…DISCDKDERK (101 aa)) constitute a propeptide, cathelin-like domain (CLD). Cystine bridges form between C86-C97 and C108-C125. The active core stretch occupies residues 150-162 (FKKIGQKINDFLG).

It belongs to the cathelicidin family. In terms of assembly, monomer, homodimer or homotrimer (in vitro). Oligomerizes as tetra- or hexamer in solution (in vitro). Proteolytically cleaved by proteinase PRTN3 into antibacterial peptide LL-37. Proteolytically cleaved by cathepsin CTSG and neutrophil elastase ELANE. In terms of processing, resistant to proteolytic degradation in solution, and when bound to both zwitterionic (mimicking mammalian membranes) and negatively charged membranes (mimicking bacterial membranes). Post-translationally, after secretion onto the skin surface, the CAMP gene product is processed by a serine protease-dependent mechanism into multiple novel antimicrobial peptides distinct from and shorter than cathelicidin LL-37. These peptides show enhanced antimicrobial action, acquiring the ability to kill skin pathogens such as S.aureus, E.coli and C.albicans. These peptides have lost the ability to stimulate CXCL8/IL8 release from keratinocytes. The peptides act synergistically, killing bacteria at lower concentrations when present together, and maintain activity at increased salt condition.

It localises to the secreted. The protein resides in the vesicle. Antimicrobial protein that is an integral component of the innate immune system. Binds to bacterial lipopolysaccharides (LPS). Acts via neutrophil N-formyl peptide receptors to enhance the release of CXCL2. Postsecretory processing generates multiple cathelicidin antimicrobial peptides with various lengths which act as a topical antimicrobial defense in sweat on skin. The unprocessed precursor form, cathelicidin antimicrobial peptide, inhibits the growth of Gram-negative E.coli and E.aerogenes with efficiencies comparable to that of the mature peptide LL-37 (in vitro). In terms of biological role, antimicrobial peptide that is an integral component of the innate immune system. Binds to bacterial lipopolysaccharides (LPS). Causes membrane permeabilization by forming transmembrane pores (in vitro). Causes lysis of E.coli. Exhibits antimicrobial activity against Gram-negative bacteria such as P.aeruginosa, S.typhimurium, E.aerogenes, E.coli and P.syringae, Gram-positive bacteria such as L.monocytogenes, S.epidermidis, S.pyogenes and S.aureus, as well as vancomycin-resistant enterococci (in vitro). Exhibits antimicrobial activity against methicillin-resistant S.aureus, P.mirabilis, and C.albicans in low-salt media, but not in media containing 100 mM NaCl (in vitro). Forms chiral supramolecular assemblies with quinolone signal (PQS) molecules of P.aeruginosa, which may lead to interference of bacterial quorum signaling and perturbance of bacterial biofilm formation. May form supramolecular fiber-like assemblies on bacterial membranes. Induces cytokine and chemokine producation as well as TNF/TNFA and CSF2/GMCSF production in normal human keratinocytes. Exhibits hemolytic activity against red blood cells. Functionally, exhibits antimicrobial activity against E.coli and B.megaterium (in vitro). The polypeptide is Cathelicidin antimicrobial peptide (Cebus capucinus (White-faced sapajou)).